An 80-amino-acid polypeptide reads, in one-letter code: Defensin-like protein 50 (80 aa).

The N-terminal stretch at 1-27 is a signal peptide; that stretch reads MGFTKIVVTFFLVVMLAVSSSSQNAMA. 4 disulfides stabilise this stretch: Cys-39/Cys-79, Cys-43/Cys-66, Cys-52/Cys-77, and Cys-56/Cys-78.

Belongs to the DEFL family.

It localises to the secreted. The polypeptide is Defensin-like protein 50 (LCR49) (Arabidopsis thaliana (Mouse-ear cress)).